The primary structure comprises 444 residues: Protein kinase C and casein kinase substrate in neurons protein 1 (444 aa).

Phosphoserine occurs at positions 2 and 79. The F-BAR domain occupies 13–283 (EETTDSFWEV…AIRGADAQED (271 aa)). Residues 26–275 (KRTVKRIDDG…HVYRELEQAI (250 aa)) adopt a coiled-coil conformation. 2 disordered regions span residues 173–194 (REMNSKSEQSVTPEQQKKLQDK) and 309–386 (LPHT…DDSK). At T184 the chain carries Phosphothreonine. Positions 314-324 (TKKEKQPKKAE) are enriched in basic and acidic residues. The span at 329 to 351 (TNATGAVESTSQAGDRGSVSSYD) shows a compositional bias: polar residues. Phosphoserine occurs at positions 346, 348, 349, 361, and 365. Residues 385–444 (SKGVRVRALYDYDGQEQDELSFKAGDELTKLGEEDEQGWCRGRLDSGQLGLYPANYVEAI) form the SH3 domain. Y394 is modified (phosphotyrosine). Phosphoserine is present on residues S405 and S430.

It belongs to the PACSIN family. As to quaternary structure, homodimer. May form heterooligomers with other PACSINs. Interacts with both COBL and DBNL. Identified in a complex composed of COBL, PACSIN1 and WASL. Interacts (via SH3 domain) with SYNJ1 and WASL. Interacts (via SH3 domain) with DNM1; the interaction is reduced by DNM1 phosphorylation. Interacts with DNM2 and DNM3. Interacts with MAPT. Interacts with EHD1 and EHD3. Interacts with TRPV4. In terms of processing, phosphorylated by casein kinase 2 (CK2) and protein kinase C (PKC).

The protein localises to the cytoplasm. It localises to the cell projection. Its subcellular location is the synapse. It is found in the synaptosome. The protein resides in the ruffle membrane. The protein localises to the membrane. It localises to the cytoplasmic vesicle membrane. Its subcellular location is the cytosol. It is found in the cell membrane. Functionally, binds to membranes via its F-BAR domain and mediates membrane tubulation. Plays a role in the reorganization of the microtubule cytoskeleton via its interaction with MAPT; this decreases microtubule stability and inhibits MAPT-induced microtubule polymerization. Plays a role in cellular transport processes by recruiting DNM1, DNM2 and DNM3 to membranes. Plays a role in the reorganization of the actin cytoskeleton and in neuron morphogenesis via its interaction with COBL and WASL, and by recruiting COBL to the cell cortex. Plays a role in the regulation of neurite formation, neurite branching and the regulation of neurite length. Required for normal synaptic vesicle endocytosis; this process retrieves previously released neurotransmitters to accommodate multiple cycles of neurotransmission. Required for normal excitatory and inhibitory synaptic transmission. In Pongo abelii (Sumatran orangutan), this protein is Protein kinase C and casein kinase substrate in neurons protein 1 (Pacsin1).